The sequence spans 556 residues: Guard cell S-type anion channel SLAC1 (556 aa).

Residues 1 to 103 (MERKQSNAHS…GIINGGDGRK (103 aa)) form a disordered region. The Cytoplasmic portion of the chain corresponds to 1-189 (MERKQSNAHS…EQWPFLLRFP (189 aa)). Residues 10–36 (STFADINEVEDEAEQELQQQENNNNKR) adopt a coiled-coil conformation. A compositionally biased stretch (low complexity) spans 25-34 (ELQQQENNNN). Ser-59 is subject to Phosphoserine; by SRK2E. A compositionally biased stretch (basic and acidic residues) spans 69–79 (RESRERDDKKS). Residues Ser-86, Ser-113, and Ser-120 each carry the phosphoserine; by SRK2E modification. The segment covering 86–99 (SFGGFESGGIINGG) has biased composition (gly residues). Position 146 is a phosphoserine (Ser-146). Residues 190-210 (IGCFGICLGLSSQAVLWLALA) form a helical membrane-spanning segment. Residues 211–216 (KSPATN) lie on the Extracellular side of the membrane. A helical membrane pass occupies residues 217-237 (FLHITPLINLVVWLFSLVVLV). Residues 238–265 (SVSFTYILKCIFYFEAVKREYFHPVRVN) lie on the Cytoplasmic side of the membrane. The helical transmembrane segment at 266-286 (FFFAPWVVCMFLAISVPPMFS) threads the bilayer. At 287–295 (PNRKYLHPA) the chain is on the extracellular side. Residues 296 to 316 (IWCVFMGPYFFLELKIYGQWL) traverse the membrane as a helical segment. Topologically, residues 317 to 325 (SGGKRRLCK) are cytoplasmic. Residues 326 to 346 (VANPSSHLSVVGNFVGAILAS) form a helical membrane-spanning segment. Over 347 to 352 (KVGWDE) the chain is Extracellular. The chain crosses the membrane as a helical span at residues 353–373 (VAKFLWAVGFAHYLVVFVTLY). At 374–388 (QRLPTSEALPKELHP) the chain is on the cytoplasmic side. The helical transmembrane segment at 389 to 409 (VYSMFIAAPSAASIAWNTIYG) threads the bilayer. Residues 410 to 418 (QFDGCSRTC) are Extracellular-facing. A helical transmembrane segment spans residues 419–439 (FFIALFLYISLVARINFFTGF). A topological domain (cytoplasmic) is located at residue Lys-440. The helical transmembrane segment at 441-463 (FSVAWWSYTFPMTTASVATIKYA) threads the bilayer. The Extracellular portion of the chain corresponds to 464–479 (EAVPGYPSRALALTLS). The helical transmembrane segment at 480–500 (FISTAMVCVLFVSTLLHAFVW) threads the bilayer. Residues 501-556 (QTLFPNDLAIAITKRKLTREKKPFKRAYDLKRWTKQALAKKISAEKDFEAEEESHH) lie on the Cytoplasmic side of the membrane.

This sequence belongs to the SLAC1 S-type anion channel family. As to quaternary structure, homotrimer. Interacts with SRK2E, CPK6, CPK21, CPK23 and PP2CA. The channel is inactivated upon PP2CA and ABI1 binding. Interacts with KAT1, KAT2, KAT3/KC1 and AKT2. Interacts with GHR1. Phosphorylation by SRK2E, especially on Ser-120, activates the channel. Also phosphorylated and activated by CPK21 and CPK23. Abscisic acid (ABA) promotes phosphorylation. This phosphorylation is inhibited by ABI1. Phosphorylated and activated by GHR1; this phosphorylation is repressed by ABI2 but not ABI1. Phosphorylated by HT1 on N-terminus but not C-terminus. As to expression, preferentially expressed in guard cells. Also detected in the vascular strands close to the leaf margins.

Its subcellular location is the cell membrane. Activated by GHR1-mediated phosphorylation which is negatively regulated by ABI2 but not ABI1. Activation by SRK2E/OST1 and GHR1 is repressed by HT1. Its function is as follows. Slow, weak voltage-dependent S-type anion efflux channel involved in maintenance of anion homeostasis. Cl(-) efflux through SLAC1 causes membrane depolarization, which activates outward-rectifying K1 channels, leading to KCl and water efflux to reduce turgor further and cause stomatal closure, that reduces water loss and promotes leaf turgor. Essential for stomatal closure in response to CO(2), abscisic acid (ABA), ozone O(3), light/dark transitions, humidity change, calcium ions, hydrogen peroxide H(2)O(2), reactive oxygen species (ROS), and nitric oxide. Binds to the highly selective inward-rectifying potassium channels KAT1 and AKT2, and inhibits their activities. Functions as an essential negative regulator of inward potassium channels in guard cells. Essential for the efficient stomatal closure and opening in guard cells. Involved in the local and/or systemic stomatal responses (e.g. stomatal closure) to light stress. The sequence is that of Guard cell S-type anion channel SLAC1 from Arabidopsis thaliana (Mouse-ear cress).